The chain runs to 323 residues: Global nitrogen regulator NrpRI (323 aa).

Positions 11–76 (IEIMRVIHES…TLTDLGENEM (66 aa)) are winged helix-turn-helix. An NRD region spans residues 86-323 (GFVISRIEEM…MLDYQTMKEI (238 aa)).

This sequence belongs to the NrpR family. In terms of assembly, forms a complex with NrpRII and the general archaeal transcription factors TBP and TFB. Interacts directly with NrpRII.

Its activity is regulated as follows. Under nitrogen limitation, binding of 2-oxoglutarate to the NrpRI/NrpRII complex decreases the binding affinity of NrpRI to DNA as well as the binding affinity of NrpRII to TBP and TFB, which leads to removal of the complex from the operator, RNA polymerase recruitment and initiation of transcription. Its function is as follows. Plays a major role in nitrogen regulation. Under nitrogen sufficiency, binds to the nifH and the glnk1 promoters, leading to repression of the transcription of the genes. In Methanosarcina mazei (strain ATCC BAA-159 / DSM 3647 / Goe1 / Go1 / JCM 11833 / OCM 88) (Methanosarcina frisia), this protein is Global nitrogen regulator NrpRI.